A 696-amino-acid polypeptide reads, in one-letter code: Elongation factor G (696 aa).

The tr-type G domain maps to 10–290 (THFRNIGIAA…AVVDYLPSPL (281 aa)). GTP-binding positions include 19–26 (AHIDAGKT), 89–93 (DTPGH), and 143–146 (NKMD).

It belongs to the TRAFAC class translation factor GTPase superfamily. Classic translation factor GTPase family. EF-G/EF-2 subfamily.

The protein resides in the cytoplasm. Catalyzes the GTP-dependent ribosomal translocation step during translation elongation. During this step, the ribosome changes from the pre-translocational (PRE) to the post-translocational (POST) state as the newly formed A-site-bound peptidyl-tRNA and P-site-bound deacylated tRNA move to the P and E sites, respectively. Catalyzes the coordinated movement of the two tRNA molecules, the mRNA and conformational changes in the ribosome. This Deinococcus geothermalis (strain DSM 11300 / CIP 105573 / AG-3a) protein is Elongation factor G.